A 166-amino-acid polypeptide reads, in one-letter code: MFPMVTQFMNYGQQTVRAARYIGQGLIITLSHANRLPVTIQYPYEKLITSERFRGRIHFEFDKCIACEVCVRVCPIDLPVVDWKLETDIRKKRLLNYSIDFGICIFCGNCVEYCPTNCLSMTEEYELSTYDRHELNYNQIALGRLPMSIIDDYTIRTILNLPEIKT.

2 4Fe-4S ferredoxin-type domains span residues 55-84 (GRIHFEFDKCIACEVCVRVCPIDLPVVDWK) and 95-124 (LNYSIDFGICIFCGNCVEYCPTNCLSMTEE). Residues cysteine 64, cysteine 67, cysteine 70, cysteine 74, cysteine 104, cysteine 107, cysteine 110, and cysteine 114 each coordinate [4Fe-4S] cluster.

Belongs to the complex I 23 kDa subunit family. As to quaternary structure, NDH is composed of at least 16 different subunits, 5 of which are encoded in the nucleus. [4Fe-4S] cluster serves as cofactor.

The protein resides in the plastid. The protein localises to the chloroplast thylakoid membrane. The enzyme catalyses a plastoquinone + NADH + (n+1) H(+)(in) = a plastoquinol + NAD(+) + n H(+)(out). It catalyses the reaction a plastoquinone + NADPH + (n+1) H(+)(in) = a plastoquinol + NADP(+) + n H(+)(out). NDH shuttles electrons from NAD(P)H:plastoquinone, via FMN and iron-sulfur (Fe-S) centers, to quinones in the photosynthetic chain and possibly in a chloroplast respiratory chain. The immediate electron acceptor for the enzyme in this species is believed to be plastoquinone. Couples the redox reaction to proton translocation, and thus conserves the redox energy in a proton gradient. In Hulsea algida (Pacific hulsea), this protein is NAD(P)H-quinone oxidoreductase subunit I, chloroplastic.